Here is a 527-residue protein sequence, read N- to C-terminus: Protein Lilipod (527 aa).

Residues 1-22 (MDEEEEEEVTDLKLQLFHNTVR) lie on the Extracellular side of the membrane. A helical membrane pass occupies residues 23–43 (EHIIFLLLIILLYSSSYVVVS). Residues 44–65 (RFRRRDRDDLYSNDEDEVLVYR) lie on the Cytoplasmic side of the membrane. The chain crosses the membrane as a helical span at residues 66–86 (ISFWLCTFTLAVAEGAAMLLP). The Extracellular portion of the chain corresponds to 87–117 (VSIASNEVLLLYPNSYYVKWLNSSLIQGLWN). A helical transmembrane segment spans residues 118 to 138 (HVFLFSNLSLFIFLPFVYLFS). The Cytoplasmic segment spans residues 139–160 (ESTGFVGNKKGILPRVYETFTV). The helical transmembrane segment at 161–181 (FMLMAIIVLVLTAVLSAVFGI) threads the bilayer. Residues 182 to 194 (EKLQFFWFLNLGS) are Extracellular-facing. Residues 195 to 215 (VHLPFLYSCVSFLGVMLMLIC) traverse the membrane as a helical segment. Residues 216-341 (TPYGFVRLFG…LRTSSTFQRT (126 aa)) are Cytoplasmic-facing. A helical membrane pass occupies residues 342–362 (FVYPLAMLLLLFCTAVTILLV). Residues 363-395 (VQNTLELLIGIKALPLSTRQFALGISSLSKLGP) are Extracellular-facing. The chain crosses the membrane as a helical span at residues 396 to 416 (FGAGLEVCLIFYLGATSVVGF). Residues 417-433 (YSMPFMRKVCPKRRQTS) are Cytoplasmic-facing. Residues 434-454 (LPQLMLNCGFMLVLSSALPLL) form a helical membrane-spanning segment. At 455–468 (SRIIGITNFDLLGD) the chain is on the extracellular side. The chain crosses the membrane as a helical span at residues 469 to 489 (FGAIEWLGNFQIVLLYNLVFG). The Cytoplasmic segment spans residues 490-527 (TTTALCLANKFTATVRRELRARLVENYVLFTNYISFIN).

This sequence belongs to the LIMR family. As to expression, in the ovary, detected in germline stem cells and their progeny. Also detected in the somatic follicular epithelium.

The protein resides in the cell membrane. In terms of biological role, required during oogenesis to promote self-renewal of germline stem cells, probably by enhancing BMP signaling activity. This chain is Protein Lilipod, found in Drosophila melanogaster (Fruit fly).